The following is a 515-amino-acid chain: 4-hydroxybenzoate brominase (decarboxylating) (515 aa).

7 residues coordinate FAD: S13, E32, V40, F41, H51, V102, and Q364.

It belongs to the FMO family. Requires FAD as cofactor.

The enzyme catalyses 2 bromide + 4-hydroxybenzoate + 2 NADPH + 2 O2 + 5 H(+) = 2,4-dibromophenol + CO2 + 2 NADP(+) + 4 H2O. It catalyses the reaction bromide + 4-hydroxybenzoate + NADPH + O2 + 2 H(+) = 3-bromo-4-hydroxybenzoate + NADP(+) + 2 H2O. It carries out the reaction 3-bromo-4-hydroxybenzoate + bromide + NADPH + O2 + 3 H(+) = 2,4-dibromophenol + CO2 + NADP(+) + 2 H2O. The catalysed reaction is 3,4-dihydroxybenzoate + 2 bromide + 2 NADPH + 2 O2 + 5 H(+) = 3,5-dibromobenzene-1,2-diol + CO2 + 2 NADP(+) + 4 H2O. The enzyme catalyses 3,4-dihydroxybenzoate + bromide + NADPH + O2 + 2 H(+) = 3-bromo-4,5-dihydroxybenzoate + NADP(+) + 2 H2O. It catalyses the reaction 3-bromo-4,5-dihydroxybenzoate + bromide + NADPH + O2 + 3 H(+) = 3,5-dibromobenzene-1,2-diol + CO2 + NADP(+) + 2 H2O. Its activity is regulated as follows. Activity is abolished in the absence of either bromide or NADPH, while a partial reduction in activity is observed upon omission of FAD. Activity does not require the addition of a flavin reductase to regenerate FADH(2) in situ. Brominase involved in the biosynthesis of polybrominated aromatic organic compounds. Catalyzes the bromination of 4-hydroxybenzoate (4-HBA) to 3-bromo-4-hydroxybenzoate, followed by bromination and decarboxylation of 3-bromo-4-hydroxybenzoate to 2,4-dibromophenol. Can also use 3,4-dihydroxybenzoate, with lower efficiency, forming 3-bromo-4,5-dihydroxybenzoate and 3,5-dibromobenzene-1,2-diol. Can utilize iodide in vivo leading to the formation of iodophenols, but cannot use chloride. This chain is 4-hydroxybenzoate brominase (decarboxylating), found in Pseudoalteromonas luteoviolacea (strain 2ta16).